We begin with the raw amino-acid sequence, 240 residues long: tRNA (guanine-N(7)-)-methyltransferase (240 aa).

Glutamate 70, glutamate 95, aspartate 122, and aspartate 145 together coordinate S-adenosyl-L-methionine. Residue aspartate 145 is part of the active site. Substrate is bound by residues lysine 149, aspartate 181, and 218–221 (TKFE).

Belongs to the class I-like SAM-binding methyltransferase superfamily. TrmB family.

It carries out the reaction guanosine(46) in tRNA + S-adenosyl-L-methionine = N(7)-methylguanosine(46) in tRNA + S-adenosyl-L-homocysteine. Its pathway is tRNA modification; N(7)-methylguanine-tRNA biosynthesis. In terms of biological role, catalyzes the formation of N(7)-methylguanine at position 46 (m7G46) in tRNA. In Pseudomonas entomophila (strain L48), this protein is tRNA (guanine-N(7)-)-methyltransferase.